The sequence spans 605 residues: Replication and transcription activator (605 aa).

2 disordered regions span residues 307-381 (SLPS…EPEQ) and 447-501 (RIRP…TPEA). Over residues 321–338 (SADCGDSSSSSSDSGNSD) the composition is skewed to low complexity. The span at 341 to 353 (QSEREEARAEAPR) shows a compositional bias: basic and acidic residues. Over residues 355 to 364 (RAPKSRRTSR) the composition is skewed to basic residues.

The protein belongs to the herpesviridae Rta family. In terms of assembly, interacts with human ATF7IP protein, leading to promote and regulate host genes in virus-infected cells. Interacts with RNA polymerase III complex; this interaction downregulates small RNA transcription and 5'-pppRNA production.

Its subcellular location is the host nucleus. It is found in the virion tegument. In terms of biological role, immediate-early transcription factor that controls the initiation of viral lytic gene expression and lytic reactivation from latency. Triggers lytic replication, and initiates a cellular senescence program in epithelial cells. Up-regulates human DCR3/TNFRSF6B by directly binding to its receptor. Globally induces a proteasome-dependent loss of SUMOylated proteins in the host cell and the loss of promeylocytic leukemia nuclear bodies. Improves the stability of the triplex capsid protein TRX1 by reducing the ubiquitination level of the latter. Mediates evasion of inflammasome activation and antiviral responses (T- and NK cell activation) during EBV early lytic infection. The chain is Replication and transcription activator from Epstein-Barr virus (strain GD1) (HHV-4).